A 595-amino-acid chain; its full sequence is Elongation factor 4 (595 aa).

The 182-residue stretch at 2–183 (KNIRNFCIIA…TIVEKVPAPK (182 aa)) folds into the tr-type G domain. Residues 14–19 (DHGKST) and 130–133 (NKID) contribute to the GTP site.

Belongs to the TRAFAC class translation factor GTPase superfamily. Classic translation factor GTPase family. LepA subfamily.

It localises to the cell inner membrane. It catalyses the reaction GTP + H2O = GDP + phosphate + H(+). Required for accurate and efficient protein synthesis under certain stress conditions. May act as a fidelity factor of the translation reaction, by catalyzing a one-codon backward translocation of tRNAs on improperly translocated ribosomes. Back-translocation proceeds from a post-translocation (POST) complex to a pre-translocation (PRE) complex, thus giving elongation factor G a second chance to translocate the tRNAs correctly. Binds to ribosomes in a GTP-dependent manner. This chain is Elongation factor 4, found in Parabacteroides distasonis (strain ATCC 8503 / DSM 20701 / CIP 104284 / JCM 5825 / NCTC 11152).